Consider the following 425-residue polypeptide: MTKRIINNVFAREILDSRGYPTVEVEIELCDGATGRASVPSGASTGKLEALELRDQDEKRYCGKGVLKAVKAVNGVIANAIIGMDAADQSTIDKALIELDGTRNKSKLGANATLGVSLASAKAAANSFKMPLYRYLGGEQANVMPFPLINIINGGVHADNKLDFQEFMILPIGAEAFSEAIRMSAEVFHNLRSILRKRGYSTNVGDEGGFAPNIESTEEALDLIVHAIESASYSTQNHFALGLDVASSTFYKNKIYKFANKELTSEELVEYYYNLVEKYPITSMEDAMSEDDYEGWKLLTAKLGSKVQLVGDDLFVTNCELIRKGIEEKMANAVLIKPNQIGTLTETFTAIGMTKSGGYKAVISHRSGETEDTTISHIAIASNCGQIKTGSLSRSDRLAKYNELIRIEGTLERNAKYYYGLAWTS.

Position 165 (glutamine 165) interacts with (2R)-2-phosphoglycerate. Glutamate 207 acts as the Proton donor in catalysis. 3 residues coordinate Mg(2+): aspartate 244, glutamate 285, and aspartate 312. Lysine 337, arginine 366, serine 367, and lysine 388 together coordinate (2R)-2-phosphoglycerate. Lysine 337 functions as the Proton acceptor in the catalytic mechanism.

This sequence belongs to the enolase family. Requires Mg(2+) as cofactor.

It localises to the cytoplasm. It is found in the secreted. Its subcellular location is the cell surface. The enzyme catalyses (2R)-2-phosphoglycerate = phosphoenolpyruvate + H2O. It functions in the pathway carbohydrate degradation; glycolysis; pyruvate from D-glyceraldehyde 3-phosphate: step 4/5. In terms of biological role, catalyzes the reversible conversion of 2-phosphoglycerate (2-PG) into phosphoenolpyruvate (PEP). It is essential for the degradation of carbohydrates via glycolysis. In Wolbachia sp. subsp. Brugia malayi (strain TRS), this protein is Enolase.